Reading from the N-terminus, the 291-residue chain is 4-hydroxy-tetrahydrodipicolinate synthase (291 aa).

T44 contacts pyruvate. Y132 acts as the Proton donor/acceptor in catalysis. The Schiff-base intermediate with substrate role is filled by K160. A pyruvate-binding site is contributed by I202.

Belongs to the DapA family. As to quaternary structure, homotetramer; dimer of dimers.

The protein localises to the cytoplasm. It catalyses the reaction L-aspartate 4-semialdehyde + pyruvate = (2S,4S)-4-hydroxy-2,3,4,5-tetrahydrodipicolinate + H2O + H(+). It participates in amino-acid biosynthesis; L-lysine biosynthesis via DAP pathway; (S)-tetrahydrodipicolinate from L-aspartate: step 3/4. Catalyzes the condensation of (S)-aspartate-beta-semialdehyde [(S)-ASA] and pyruvate to 4-hydroxy-tetrahydrodipicolinate (HTPA). The protein is 4-hydroxy-tetrahydrodipicolinate synthase of Syntrophobacter fumaroxidans (strain DSM 10017 / MPOB).